The chain runs to 884 residues: Protein translocase subunit SecA (884 aa).

ATP is bound by residues Gln-82, Gly-100–Thr-104, and Asp-491.

This sequence belongs to the SecA family.

The protein localises to the plastid. It localises to the chloroplast stroma. It is found in the chloroplast thylakoid membrane. The catalysed reaction is ATP + H2O + cellular proteinSide 1 = ADP + phosphate + cellular proteinSide 2.. Has a central role in coupling the hydrolysis of ATP to the transfer of proteins across the thylakoid membrane. This chain is Protein translocase subunit SecA, found in Olisthodiscus luteus (Marine phytoflagellate).